A 258-amino-acid polypeptide reads, in one-letter code: Phosphate import ATP-binding protein PstB (258 aa).

In terms of domain architecture, ABC transporter spans 5–247 (LDLKDVNIYY…EKIFSNPTQK (243 aa)). Residue 37–44 (GPSGCGKS) coordinates ATP.

This sequence belongs to the ABC transporter superfamily. Phosphate importer (TC 3.A.1.7) family. In terms of assembly, the complex is composed of two ATP-binding proteins (PstB), two transmembrane proteins (PstC and PstA) and a solute-binding protein (PstS).

Its subcellular location is the cell membrane. It carries out the reaction phosphate(out) + ATP + H2O = ADP + 2 phosphate(in) + H(+). In terms of biological role, part of the ABC transporter complex PstSACB involved in phosphate import. Responsible for energy coupling to the transport system. In Rhodococcus jostii (strain RHA1), this protein is Phosphate import ATP-binding protein PstB.